The chain runs to 134 residues: Acyl carrier protein, chloroplastic (134 aa).

The N-terminal 51 residues, 1–51 (MATTFSASVSMQATSLATTTRISFQKPVLVSNHGRTNLSFNLSRTRLSISC), are a transit peptide targeting the chloroplast. The Carrier domain occupies 55-130 (QETVEKVSEI…QAAELIEELM (76 aa)). Ser90 is subject to O-(pantetheine 4'-phosphoryl)serine.

It belongs to the acyl carrier protein (ACP) family. Post-translationally, 4'-phosphopantetheine is transferred from CoA to a specific serine of apo-ACP by acpS. This modification is essential for activity because fatty acids are bound in thioester linkage to the sulfhydryl of the prosthetic group. In terms of tissue distribution, seed.

It is found in the plastid. The protein localises to the chloroplast. It functions in the pathway lipid metabolism; fatty acid biosynthesis. Its function is as follows. Carrier of the growing fatty acid chain in fatty acid biosynthesis. The polypeptide is Acyl carrier protein, chloroplastic (ACL1.C1) (Brassica napus (Rape)).